The chain runs to 409 residues: Carbamoyl phosphate synthase arginine-specific small chain (409 aa).

The Glutamine amidotransferase type-1 domain occupies 197 to 389; it reads NVALIDCGVK…FDNMSQYRAL (193 aa). The active-site Nucleophile is Cys277. Catalysis depends on residues His362 and Glu364.

The protein belongs to the CarA family. Heterodimer composed of 2 chains; the small (or glutamine) chain promotes the hydrolysis of glutamine to ammonia, which is used by the large (or ammonia) chain to synthesize carbamoyl phosphate.

It is found in the cytoplasm. It carries out the reaction hydrogencarbonate + L-glutamine + 2 ATP + H2O = carbamoyl phosphate + L-glutamate + 2 ADP + phosphate + 2 H(+). The enzyme catalyses L-glutamine + H2O = L-glutamate + NH4(+). Its pathway is amino-acid biosynthesis; L-arginine biosynthesis; carbamoyl phosphate from bicarbonate: step 1/1. Functionally, small subunit of the arginine-specific carbamoyl phosphate synthase (CPSase). CPSase catalyzes the formation of carbamoyl phosphate from the ammonia moiety of glutamine, carbonate, and phosphate donated by ATP, constituting the first step of 2 biosynthetic pathways, one leading to arginine and/or urea and the other to pyrimidine nucleotides. The small subunit (glutamine amidotransferase) binds and cleaves glutamine to supply the large subunit with the substrate ammonia. The polypeptide is Carbamoyl phosphate synthase arginine-specific small chain (CPA1) (Kluyveromyces lactis (strain ATCC 8585 / CBS 2359 / DSM 70799 / NBRC 1267 / NRRL Y-1140 / WM37) (Yeast)).